Consider the following 955-residue polypeptide: Sex determination protein fruitless (955 aa).

2 disordered regions span residues 1 to 55 and 70 to 89; these read MMAT…HAHS and IETD…LPLP. Residues 35-55 are compositionally biased toward basic residues; it reads PHGHGHLHSHAHAHGHGHAHS. The span at 76–89 shows a compositional bias: pro residues; the sequence is APPPPLPPPPLPLP. One can recognise a BTB domain in the interval 131–196; sequence CDVTLACEGE…MYKGEVNVGQ (66 aa). 3 disordered regions span residues 229–288, 352–526, and 784–814; these read LRDS…SMSE, NRSA…LGGG, and ANHQ…SGAG. The span at 233 to 246 shows a compositional bias: polar residues; sequence AASSPTGRGPSNYT. Composition is skewed to basic and acidic residues over residues 258-279 and 360-379; these read AMRE…DELT and CSDR…RDDL. The span at 387-420 shows a compositional bias: low complexity; it reads KDNNNSNSSSTGGNNNNNNNNNNNSSSNNNNSSS. Residues 421–446 show a composition bias toward basic and acidic residues; that stretch reads NRERNNSGERERERERERERDRDREL. Composition is skewed to low complexity over residues 464 to 475 and 790 to 814; these read SSSNCDNSLSSS and QHPP…SGAG. The C2H2-type zinc-finger motif lies at 918–941; that stretch reads HECPVCGQKFTRRDNMKAHCKIKH.

Expressed in parts of the adult male brain associated with the courtship song and steps of the male courtship. Also expressed in the larval and pupal male mushroom body and optic lobe. Expressed in pupal female optic lobe.

It localises to the nucleus. In terms of biological role, probably acts as a transcriptional regulator. Part of the somatic sex determination hierarchy; sex determination genes transformer (tra) and transformer-2 (tra-2) switch fru splicing from the male-specific pattern to the female-specific pattern through activation of the female-specific fru 5'-splice site. Vital for the development of males and females. Controls the development of the male specific abdominal muscle of Lawrence. Plays a role in male courtship behavior and sexual orientation. Enhances male-specific expression of takeout in brain-associated fat body. The chain is Sex determination protein fruitless (fru) from Drosophila melanogaster (Fruit fly).